The chain runs to 529 residues: Probable cytochrome P450 6t1 (529 aa).

Residue Cys-472 participates in heme binding.

It belongs to the cytochrome P450 family. Heme is required as a cofactor.

It is found in the endoplasmic reticulum membrane. It localises to the microsome membrane. In terms of biological role, may be involved in the metabolism of insect hormones and in the breakdown of synthetic insecticides. This Drosophila melanogaster (Fruit fly) protein is Probable cytochrome P450 6t1 (Cyp6t1).